Consider the following 167-residue polypeptide: Transmembrane protein 229B (167 aa).

The Cytoplasmic segment spans residues 1–14 (MASAEPLTALSRWY). A helical membrane pass occupies residues 15–35 (LYAIHGYFCEVMFTAAWEFVV). The Extracellular segment spans residues 36 to 40 (NFNWK). Residues 41 to 61 (FPGVTSVWALFIYGTSILIVE) form a helical membrane-spanning segment. Over 62 to 73 (RMYLRLRGRCPL) the chain is Cytoplasmic. A helical transmembrane segment spans residues 74-94 (LVRCVIYTLWTYLWEFTTGFI). The Extracellular segment spans residues 95–109 (LRQFNACPWDYSQFD). The chain crosses the membrane as a helical span at residues 110–130 (FDFMGLITLEYAVPWFCGALI). The Cytoplasmic portion of the chain corresponds to 131–167 (MEQFIIRNTLRLRFDKDAEPGEPASPPALANGHVKTD). The disordered stretch occupies residues 148–167 (AEPGEPASPPALANGHVKTD).

This sequence belongs to the TMEM229 family.

It is found in the membrane. This is Transmembrane protein 229B (TMEM229B) from Mus musculus (Mouse).